Here is a 91-residue protein sequence, read N- to C-terminus: Cell division topological specificity factor (91 aa).

The protein belongs to the MinE family.

In terms of biological role, prevents the cell division inhibition by proteins MinC and MinD at internal division sites while permitting inhibition at polar sites. This ensures cell division at the proper site by restricting the formation of a division septum at the midpoint of the long axis of the cell. The polypeptide is Cell division topological specificity factor (Erwinia tasmaniensis (strain DSM 17950 / CFBP 7177 / CIP 109463 / NCPPB 4357 / Et1/99)).